We begin with the raw amino-acid sequence, 372 residues long: MTALPQRTLMVMAGGTGGHVFPGLAVAHLMQAWGWKVVWLGNPAGMEATLVPKHGIPMEYVRFGGLRGKGMKTKLMLPVNLLRACTQSLSVLRRVKPDVVLGMGGYITFPAGLMTALSGRPLVLHEQNSIAGLANKVLAKVAKRVLVAFPNALPHGEWTGNPIREELARAIAPKARYAQRSGPLNVLVVGGSLGAAALNEVVPRAVALLAPNERPRIVHQAGAKHIEALRENYSAAGLQAGADVELVPFIDDMTSAYANADLVICRSGAMTVSEISAVGVAAFFVPFPYAVDDHQTTNAAFLADNGAALVVQQRDLSAETLADWLRSQTRETLAEMAERSRSLAKPDATEQVAQICATVAGSISGASPEGKQ.

UDP-N-acetyl-alpha-D-glucosamine contacts are provided by residues 16–18 (TGG), Asn-128, Arg-164, Ser-192, Ile-250, and Gln-295.

The protein belongs to the glycosyltransferase 28 family. MurG subfamily.

It localises to the cell inner membrane. The enzyme catalyses di-trans,octa-cis-undecaprenyl diphospho-N-acetyl-alpha-D-muramoyl-L-alanyl-D-glutamyl-meso-2,6-diaminopimeloyl-D-alanyl-D-alanine + UDP-N-acetyl-alpha-D-glucosamine = di-trans,octa-cis-undecaprenyl diphospho-[N-acetyl-alpha-D-glucosaminyl-(1-&gt;4)]-N-acetyl-alpha-D-muramoyl-L-alanyl-D-glutamyl-meso-2,6-diaminopimeloyl-D-alanyl-D-alanine + UDP + H(+). Its pathway is cell wall biogenesis; peptidoglycan biosynthesis. In terms of biological role, cell wall formation. Catalyzes the transfer of a GlcNAc subunit on undecaprenyl-pyrophosphoryl-MurNAc-pentapeptide (lipid intermediate I) to form undecaprenyl-pyrophosphoryl-MurNAc-(pentapeptide)GlcNAc (lipid intermediate II). The sequence is that of UDP-N-acetylglucosamine--N-acetylmuramyl-(pentapeptide) pyrophosphoryl-undecaprenol N-acetylglucosamine transferase from Paraburkholderia phytofirmans (strain DSM 17436 / LMG 22146 / PsJN) (Burkholderia phytofirmans).